The following is a 171-amino-acid chain: Translation initiation factor IF-3 (171 aa).

It belongs to the IF-3 family. As to quaternary structure, monomer.

It is found in the cytoplasm. In terms of biological role, IF-3 binds to the 30S ribosomal subunit and shifts the equilibrium between 70S ribosomes and their 50S and 30S subunits in favor of the free subunits, thus enhancing the availability of 30S subunits on which protein synthesis initiation begins. The polypeptide is Translation initiation factor IF-3 (Thermus thermophilus (strain ATCC BAA-163 / DSM 7039 / HB27)).